Here is a 406-residue protein sequence, read N- to C-terminus: S-adenosylmethionine synthase (406 aa).

Residue glycine 140–aspartate 145 participates in ATP binding.

It belongs to the AdoMet synthase 2 family. The cofactor is Mg(2+).

The enzyme catalyses L-methionine + ATP + H2O = S-adenosyl-L-methionine + phosphate + diphosphate. It functions in the pathway amino-acid biosynthesis; S-adenosyl-L-methionine biosynthesis; S-adenosyl-L-methionine from L-methionine: step 1/1. Its function is as follows. Catalyzes the formation of S-adenosylmethionine from methionine and ATP. This chain is S-adenosylmethionine synthase (mat), found in Aeropyrum pernix (strain ATCC 700893 / DSM 11879 / JCM 9820 / NBRC 100138 / K1).